The chain runs to 484 residues: Toluene efflux pump outer membrane protein TtgC (484 aa).

A signal peptide spans methionine 1–glycine 17. Cysteine 18 carries N-palmitoyl cysteine lipidation. Cysteine 18 is lipidated: S-diacylglycerol cysteine.

It belongs to the outer membrane factor (OMF) (TC 1.B.17) family.

It localises to the cell outer membrane. Its function is as follows. The outer membrane component of a constitutive organic solvent efflux system. Is involved in export of toluene, styrene, m-xylene, propylbenzene and ethylbenzene. Also exports AMP and the antibiotics carbenicillin, nalidixic acid, chloramphenicol and tetracycline. The chain is Toluene efflux pump outer membrane protein TtgC (ttgC) from Pseudomonas putida (strain DOT-T1E).